Consider the following 386-residue polypeptide: DNA-directed RNA polymerase subunit Rpo1C (386 aa).

Belongs to the RNA polymerase beta' chain family. Part of the RNA polymerase complex.

The protein localises to the cytoplasm. The enzyme catalyses RNA(n) + a ribonucleoside 5'-triphosphate = RNA(n+1) + diphosphate. Functionally, DNA-dependent RNA polymerase (RNAP) catalyzes the transcription of DNA into RNA using the four ribonucleoside triphosphates as substrates. Forms part of the jaw domain. The sequence is that of DNA-directed RNA polymerase subunit Rpo1C from Methanococcus maripaludis (strain DSM 14266 / JCM 13030 / NBRC 101832 / S2 / LL).